The chain runs to 298 residues: MIKYYDRKTQTYQIEKVAGEKMIRWTYSSPVGMRLLETVVKKRMCSSFYGWYLDRPISRRKIHPFVCKFDLDLSIAEKNLKEFSSFNDFFYRKLKPSARSIDPCQDSLISLGDGKLLAYEDIDLDCLVQVKGLTYSLKELIKDPETASKYKRGTCLILRLCPTDYHRFHFIDSGICEPSHRIKGSYYSVNPVALQKVAKLFCENKREWSIFHSDHFGDILTIEVGATFVGSIIQSYTPHQPVARGDEKGYFKFGGSTVLLFFEENKIKIDPDIVEQTKLGYETYVLFGEKVGVRHKRR.

Active-site charge relay system; for autoendoproteolytic cleavage activity residues include Asp113, His169, and Ser256. Residue Ser256 is the Schiff-base intermediate with substrate; via pyruvic acid; for decarboxylase activity of the active site. Ser256 is modified (pyruvic acid (Ser); by autocatalysis).

This sequence belongs to the phosphatidylserine decarboxylase family. PSD-B subfamily. Prokaryotic type II sub-subfamily. As to quaternary structure, heterodimer of a large membrane-associated beta subunit and a small pyruvoyl-containing alpha subunit. Pyruvate is required as a cofactor. In terms of processing, is synthesized initially as an inactive proenzyme. Formation of the active enzyme involves a self-maturation process in which the active site pyruvoyl group is generated from an internal serine residue via an autocatalytic post-translational modification. Two non-identical subunits are generated from the proenzyme in this reaction, and the pyruvate is formed at the N-terminus of the alpha chain, which is derived from the carboxyl end of the proenzyme. The autoendoproteolytic cleavage occurs by a canonical serine protease mechanism, in which the side chain hydroxyl group of the serine supplies its oxygen atom to form the C-terminus of the beta chain, while the remainder of the serine residue undergoes an oxidative deamination to produce ammonia and the pyruvoyl prosthetic group on the alpha chain. During this reaction, the Ser that is part of the protease active site of the proenzyme becomes the pyruvoyl prosthetic group, which constitutes an essential element of the active site of the mature decarboxylase.

The protein resides in the cell membrane. It catalyses the reaction a 1,2-diacyl-sn-glycero-3-phospho-L-serine + H(+) = a 1,2-diacyl-sn-glycero-3-phosphoethanolamine + CO2. The protein operates within phospholipid metabolism; phosphatidylethanolamine biosynthesis; phosphatidylethanolamine from CDP-diacylglycerol: step 2/2. Functionally, catalyzes the formation of phosphatidylethanolamine (PtdEtn) from phosphatidylserine (PtdSer). The polypeptide is Phosphatidylserine decarboxylase proenzyme (Desulfitobacterium hafniense (strain Y51)).